Here is a 143-residue protein sequence, read N- to C-terminus: Ribosome maturation factor RimP (143 aa).

This sequence belongs to the RimP family.

Its subcellular location is the cytoplasm. Functionally, required for maturation of 30S ribosomal subunits. The sequence is that of Ribosome maturation factor RimP from Nitrosomonas eutropha (strain DSM 101675 / C91 / Nm57).